A 184-amino-acid polypeptide reads, in one-letter code: Ras-related protein Rap-1b (184 aa).

G10 to A18 lines the GTP pocket. The interaction with KRIT1 stretch occupies residues Q25–M67. The Effector region motif lies at Y32–Y40. S39 is subject to ADP-ribosylserine; by botulinum toxin. GTP-binding positions include D57–T61, N116–D119, and S147–K149. S179 is modified (phosphoserine; by PKA). C181 is subject to Cysteine methyl ester. A lipid anchor (S-geranylgeranyl cysteine) is attached at C181. Residues Q182–L184 constitute a propeptide, removed in mature form.

The protein belongs to the small GTPase superfamily. Ras family. In terms of assembly, heterodimer with RAP1GAP. Interacts with EPAC2. Interacts with SGSM1. Interacts with SGSM2. Interacts with SGSM3. Interacts with KRIT1. Interacts with RAP1GDS1.

The protein resides in the cell membrane. The protein localises to the cytoplasm. Its subcellular location is the cytosol. It is found in the cell junction. It catalyses the reaction GTP + H2O = GDP + phosphate + H(+). Activated by guanine nucleotide-exchange factor (GEF) EPAC2 in a cAMP-dependent manner. Its function is as follows. GTP-binding protein that possesses intrinsic GTPase activity. Contributes to the polarizing activity of KRIT1 and CDH5 in the establishment and maintenance of correct endothelial cell polarity and vascular lumen. Required for the localization of phosphorylated PRKCZ, PARD3 and TIAM1 to the cell junction. Plays a role in the establishment of basal endothelial barrier function. This chain is Ras-related protein Rap-1b (Rap1b), found in Rattus norvegicus (Rat).